We begin with the raw amino-acid sequence, 246 residues long: Ubiquinone/menaquinone biosynthesis C-methyltransferase UbiE (246 aa).

S-adenosyl-L-methionine-binding positions include Thr-75, Asp-95, and 119–120 (DA).

It belongs to the class I-like SAM-binding methyltransferase superfamily. MenG/UbiE family.

It carries out the reaction a 2-demethylmenaquinol + S-adenosyl-L-methionine = a menaquinol + S-adenosyl-L-homocysteine + H(+). The enzyme catalyses a 2-methoxy-6-(all-trans-polyprenyl)benzene-1,4-diol + S-adenosyl-L-methionine = a 5-methoxy-2-methyl-3-(all-trans-polyprenyl)benzene-1,4-diol + S-adenosyl-L-homocysteine + H(+). Its pathway is quinol/quinone metabolism; menaquinone biosynthesis; menaquinol from 1,4-dihydroxy-2-naphthoate: step 2/2. It participates in cofactor biosynthesis; ubiquinone biosynthesis. Methyltransferase required for the conversion of demethylmenaquinol (DMKH2) to menaquinol (MKH2) and the conversion of 2-polyprenyl-6-methoxy-1,4-benzoquinol (DDMQH2) to 2-polyprenyl-3-methyl-6-methoxy-1,4-benzoquinol (DMQH2). The protein is Ubiquinone/menaquinone biosynthesis C-methyltransferase UbiE of Desulfotalea psychrophila (strain LSv54 / DSM 12343).